The following is a 940-amino-acid chain: Acetyl-coenzyme A synthetase (940 aa).

An N-terminal signal peptide occupies residues 1-33 (MCCAIWSASRAPACSASQLSSSHAVRPSVVPDA). A unknown region spans residues 1-289 (MCCAIWSASR…VQRSVTRLTA (289 aa)). 3 disordered regions span residues 70 to 127 (TARA…RPRC), 157 to 202 (VAPP…ADSA), and 224 to 274 (ASSQ…QQTC). Polar residues-rich tracts occupy residues 72 to 95 (RATT…TAAS) and 107 to 120 (SSIS…TSGS). Composition is skewed to low complexity over residues 184–202 (TAPP…ADSA) and 224–245 (ASSQ…SGRS). The segment covering 258 to 274 (SSPTVQRNQTTVHQQTC) has biased composition (polar residues). The tract at residues 290–940 (MSNPSHAEVP…SVFEAIRASK (651 aa)) is acetyl-coenzyme A synthetase. CoA is bound by residues 480–483 (RRGK) and threonine 599. Residues 675–677 (GEP), 699–704 (DTWWQT), aspartate 796, and arginine 811 each bind ATP. Serine 819 serves as a coordination point for CoA. ATP is bound at residue arginine 822. Residues valine 833, histidine 835, and valine 838 each coordinate Mg(2+). N6-acetyllysine is present on lysine 906.

This sequence belongs to the ATP-dependent AMP-binding enzyme family. The cofactor is Mg(2+). Post-translationally, acetylated on Lys-906 by Pat in the presence of acetyl-CoA as an acetyl donor and ATP. Acetylation results in the inactivation of the enzyme. Deacetylation by the SIR2-homolog deacetylase CobB is required to activate the enzyme.

The enzyme catalyses acetate + ATP + CoA = acetyl-CoA + AMP + diphosphate. Its function is as follows. Catalyzes the conversion of acetate into acetyl-CoA (AcCoA), an essential intermediate at the junction of anabolic and catabolic pathways. AcsA undergoes a two-step reaction. In the first half reaction, AcsA combines acetate with ATP to form acetyl-adenylate (AcAMP) intermediate. In the second half reaction, it can then transfer the acetyl group from AcAMP to the sulfhydryl group of CoA, forming the product AcCoA. The protein is Acetyl-coenzyme A synthetase (acsA) of Mycolicibacterium smegmatis (strain ATCC 700084 / mc(2)155) (Mycobacterium smegmatis).